Reading from the N-terminus, the 305-residue chain is Olfactory receptor 9G1 (305 aa).

Residues M1–L24 are Extracellular-facing. An N-linked (GlcNAc...) asparagine glycan is attached at N5. The chain crosses the membrane as a helical span at residues G25 to I45. The Cytoplasmic segment spans residues V46–C53. A helical membrane pass occupies residues L54 to S74. At V75–C98 the chain is on the extracellular side. C96 and C188 are joined by a disulfide. Residues Q99–Y119 traverse the membrane as a helical segment. Over D120–K138 the chain is Cytoplasmic. A helical membrane pass occupies residues L139–T159. The Extracellular portion of the chain corresponds to K160–I196. Residues M197–S216 form a helical membrane-spanning segment. Residues Y217–A236 lie on the Cytoplasmic side of the membrane. Residues F237–I257 form a helical membrane-spanning segment. Topologically, residues Y258–D270 are extracellular. The chain crosses the membrane as a helical span at residues K271–L291. Topologically, residues R292–P305 are cytoplasmic.

Belongs to the G-protein coupled receptor 1 family.

Its subcellular location is the cell membrane. In terms of biological role, odorant receptor. The protein is Olfactory receptor 9G1 (OR9G1) of Homo sapiens (Human).